The primary structure comprises 159 residues: MAEVANNEQQAPQFNIQRIYTKDVSFETPNSPAVFQKEWNPEVKLDLDTRSTKLADDIFEVVLSVTVTAKNGDETAFLCEVQQAGIFHIGGLTEPQLAHSLGAYCPNILFPYARESVASMVSRGTFPQLNLAPVNFDALFAQYVQQRAAAAQPTEEANA.

Belongs to the SecB family. Homotetramer, a dimer of dimers. One homotetramer interacts with 1 SecA dimer.

Its subcellular location is the cytoplasm. Functionally, one of the proteins required for the normal export of preproteins out of the cell cytoplasm. It is a molecular chaperone that binds to a subset of precursor proteins, maintaining them in a translocation-competent state. It also specifically binds to its receptor SecA. This Shewanella amazonensis (strain ATCC BAA-1098 / SB2B) protein is Protein-export protein SecB.